The sequence spans 314 residues: Ornithine carbamoyltransferase (314 aa).

Residues 61–64 (STRT), Q88, R112, and 139–142 (HPCQ) each bind carbamoyl phosphate. Residues N170, D234, and 238–239 (SM) contribute to the L-ornithine site. Residues 274-275 (CL) and R302 each bind carbamoyl phosphate.

It belongs to the aspartate/ornithine carbamoyltransferase superfamily. OTCase family.

The protein resides in the cytoplasm. It carries out the reaction carbamoyl phosphate + L-ornithine = L-citrulline + phosphate + H(+). Its pathway is amino-acid biosynthesis; L-arginine biosynthesis; L-arginine from L-ornithine and carbamoyl phosphate: step 1/3. Functionally, reversibly catalyzes the transfer of the carbamoyl group from carbamoyl phosphate (CP) to the N(epsilon) atom of ornithine (ORN) to produce L-citrulline. The sequence is that of Ornithine carbamoyltransferase from Anoxybacillus flavithermus (strain DSM 21510 / WK1).